Consider the following 78-residue polypeptide: Large ribosomal subunit protein bL28 (78 aa).

A disordered region spans residues 1-20; the sequence is MSRVCQVTGKRPAVGNNRSH.

It belongs to the bacterial ribosomal protein bL28 family.

This Actinobacillus succinogenes (strain ATCC 55618 / DSM 22257 / CCUG 43843 / 130Z) protein is Large ribosomal subunit protein bL28.